The primary structure comprises 369 residues: Protein RIC-3 (369 aa).

A signal peptide spans 1–28 (MAYSTVQRVALASGLVLALSLLLPKAFL). Residues 29-95 (SRGKRQEPPP…AGGGGSGRGL (67 aa)) lie on the Lumenal side of the membrane. The tract at residues 30–67 (RGKRQEPPPTPEGKLGRFPPMMHHHQAPSDGQTPGARF) is disordered. Residues 96-116 (MGQIIPIYGFGIFLYILYILF) form a helical membrane-spanning segment. The Cytoplasmic segment spans residues 117–369 (KLSKGKTTAE…LRKRNPQGLE (253 aa)). The stretch at 140–169 (RKITSFELAQLQEKLKETEAAMEKLINRVG) forms a coiled coil. At Lys202 the chain carries N6-acetyllysine; alternate. Lys202 participates in a covalent cross-link: Glycyl lysine isopeptide (Lys-Gly) (interchain with G-Cter in ubiquitin); alternate. Disordered stretches follow at residues 272–295 (ESDH…SVTS) and 316–369 (LAEN…QGLE). Over residues 332–346 (ETTKEEWSQDFKDEG) the composition is skewed to basic and acidic residues. The segment covering 360–369 (LRKRNPQGLE) has biased composition (basic residues).

This sequence belongs to the ric-3 family. As to quaternary structure, monomer and homodimer. Interacts with CHRNA7, CHRNA3, CHRNA4, CHRNB2, CHRNB4 and HTR3A. In terms of tissue distribution, broadly expressed, with high levels in muscle, brain, heart, pancreas and testis. In the central nervous system, highest levels are detected in the cerebellum and pituitary gland. Over-expressed in brains from patients with bipolar disease or schizophrenia. Isoform 5 is predominantly expressed in the brain.

Its subcellular location is the endoplasmic reticulum membrane. It is found in the golgi apparatus membrane. In terms of biological role, molecular chaperone which facilitates proper subunit assembly and surface trafficking of alpha-7 (CHRNA7) and alpha-8 (CHRNA8) nicotinic acetylcholine receptors. May also promote functional expression of homomeric serotoninergic 5-HT3 receptors, and of heteromeric acetylcholine receptors alpha-3/beta-2, alpha-3/beta-4, alpha-4/beta-2 and alpha-4/beta-4. This Homo sapiens (Human) protein is Protein RIC-3 (RIC3).